The following is a 249-amino-acid chain: Secreted flagellin C (249 aa).

In terms of processing, the secreted form is about 1 kDa larger than the whole cell lysate form, presumably due to post-translational modification. A 22 kDa form is also found in the secreted fraction, probably resulting from proteolysis.

It is found in the secreted. The protein resides in the host cell surface. Its function is as follows. Plays a role in virulence. This chain is Secreted flagellin C (flaC), found in Campylobacter jejuni subsp. jejuni serotype O:2 (strain ATCC 700819 / NCTC 11168).